The sequence spans 416 residues: Adenylosuccinate synthetase (416 aa).

GTP contacts are provided by residues 13–19 (GDEGKGK) and 41–43 (GHT). The active-site Proton acceptor is aspartate 14. Positions 14 and 41 each coordinate Mg(2+). Residues 14-17 (DEGK), 39-42 (NAGH), threonine 126, arginine 140, glutamine 220, threonine 235, and arginine 299 each bind IMP. The active-site Proton donor is the histidine 42. Residue 295–301 (VSTGRKR) coordinates substrate. GTP-binding positions include arginine 301, 327–329 (KLD), and 405–407 (STS).

Belongs to the adenylosuccinate synthetase family. As to quaternary structure, homodimer. Mg(2+) serves as cofactor.

The protein localises to the cytoplasm. It carries out the reaction IMP + L-aspartate + GTP = N(6)-(1,2-dicarboxyethyl)-AMP + GDP + phosphate + 2 H(+). Its pathway is purine metabolism; AMP biosynthesis via de novo pathway; AMP from IMP: step 1/2. In terms of biological role, plays an important role in the de novo pathway of purine nucleotide biosynthesis. Catalyzes the first committed step in the biosynthesis of AMP from IMP. This is Adenylosuccinate synthetase from Campylobacter jejuni subsp. jejuni serotype O:23/36 (strain 81-176).